A 172-amino-acid chain; its full sequence is uncharacterized protein (172 aa).

The tract at residues 22 to 64 is disordered; that stretch reads RSVSSSPAAKQPAPGTVAQSFPPGELALRDETGGRGRGTRGIR.

This is an uncharacterized protein from Human cytomegalovirus (strain AD169) (HHV-5).